The sequence spans 249 residues: Flavodoxin/ferredoxin--NADP reductase (249 aa).

Positions 2-102 (NTWITAKIIK…KKSYGFFTLN (101 aa)) constitute an FAD-binding FR-type domain. Residues 51 to 54 (RAYS), Tyr-67, 75 to 77 (QLT), and Thr-117 each bind FAD. NADP(+) is bound by residues 144–145 (VR), 174–175 (SR), Arg-185, and 215–217 (NPD). An FAD-binding site is contributed by 248 to 249 (YW).

Belongs to the ferredoxin--NADP reductase type 1 family. FAD serves as cofactor.

The protein resides in the cytoplasm. The catalysed reaction is 2 reduced [2Fe-2S]-[ferredoxin] + NADP(+) + H(+) = 2 oxidized [2Fe-2S]-[ferredoxin] + NADPH. It catalyses the reaction reduced [flavodoxin] + NADP(+) = oxidized [flavodoxin] + NADPH + 2 H(+). Transports electrons between flavodoxin or ferredoxin and NADPH. In Buchnera aphidicola subsp. Baizongia pistaciae (strain Bp), this protein is Flavodoxin/ferredoxin--NADP reductase (fpr).